We begin with the raw amino-acid sequence, 149 residues long: Histidine-containing phosphotransfer protein 2 (149 aa).

In terms of domain architecture, HPt spans 39–144 (TPGFVSEVVT…LQLEQQIQAY (106 aa)). H80 carries the post-translational modification Phosphohistidine.

In terms of processing, two-component system major event consists of a His-to-Asp phosphorelay between a sensor histidine kinase (HK) and a response regulator (RR). In plants, the His-to-Asp phosphorelay involves an additional intermediate named Histidine-containing phosphotransfer protein (HPt). This multistep phosphorelay consists of a His-Asp-His-Asp sequential transfer of a phosphate group between first a His and an Asp of the HK protein, followed by the transfer to a conserved His of the HPt protein and finally the transfer to an Asp in the receiver domain of the RR protein. As to expression, widely expressed.

The protein localises to the cytoplasm. It localises to the cytosol. It is found in the nucleus. Functionally, functions as a two-component phosphorelay mediators between cytokinin sensor histidine kinases and response regulators (B-type ARRs). Plays an important role in propagating cytokinin signal transduction through the multistep His-to-Asp phosphorelay. Functions as a positive regulator of the cytokinin signaling pathway. May play a regulatory role in salt and drought tolerance during plant development. In Oryza sativa subsp. japonica (Rice), this protein is Histidine-containing phosphotransfer protein 2.